A 128-amino-acid chain; its full sequence is Aspartate 1-decarboxylase (128 aa).

The active-site Schiff-base intermediate with substrate; via pyruvic acid is Ser-25. Ser-25 is subject to Pyruvic acid (Ser). Substrate is bound at residue Thr-57. Tyr-58 functions as the Proton donor in the catalytic mechanism. Residue 73–75 (GSA) participates in substrate binding.

Belongs to the PanD family. As to quaternary structure, heterooctamer of four alpha and four beta subunits. Pyruvate serves as cofactor. In terms of processing, is synthesized initially as an inactive proenzyme, which is activated by self-cleavage at a specific serine bond to produce a beta-subunit with a hydroxyl group at its C-terminus and an alpha-subunit with a pyruvoyl group at its N-terminus.

It is found in the cytoplasm. It catalyses the reaction L-aspartate + H(+) = beta-alanine + CO2. Its pathway is cofactor biosynthesis; (R)-pantothenate biosynthesis; beta-alanine from L-aspartate: step 1/1. In terms of biological role, catalyzes the pyruvoyl-dependent decarboxylation of aspartate to produce beta-alanine. This is Aspartate 1-decarboxylase from Burkholderia mallei (strain NCTC 10247).